The primary structure comprises 249 residues: 3-deoxy-manno-octulosonate cytidylyltransferase (249 aa).

Belongs to the KdsB family.

The protein resides in the cytoplasm. It catalyses the reaction 3-deoxy-alpha-D-manno-oct-2-ulosonate + CTP = CMP-3-deoxy-beta-D-manno-octulosonate + diphosphate. The protein operates within nucleotide-sugar biosynthesis; CMP-3-deoxy-D-manno-octulosonate biosynthesis; CMP-3-deoxy-D-manno-octulosonate from 3-deoxy-D-manno-octulosonate and CTP: step 1/1. It functions in the pathway bacterial outer membrane biogenesis; lipopolysaccharide biosynthesis. Activates KDO (a required 8-carbon sugar) for incorporation into bacterial lipopolysaccharide in Gram-negative bacteria. The chain is 3-deoxy-manno-octulosonate cytidylyltransferase from Serratia proteamaculans (strain 568).